Here is a 236-residue protein sequence, read N- to C-terminus: Glycosylphosphatidylinositol anchor biosynthesis protein 11 (236 aa).

Transmembrane regions (helical) follow at residues 40–60 and 65–85; these read TLTI…FGLT and GVML…GYLI. An N-linked (GlcNAc...) asparagine glycan is attached at Asn-99. Transmembrane regions (helical) follow at residues 107-127, 139-159, 184-204, and 215-235; these read LLAG…VALI, ETYL…LVLY, ILLS…PIPL, and ITLL…CFLF.

This sequence belongs to the PIGF family.

It localises to the endoplasmic reticulum membrane. Its pathway is glycolipid biosynthesis; glycosylphosphatidylinositol-anchor biosynthesis. In terms of biological role, acts in the GPI biosynthetic pathway between GlcNAc-PI synthesis and GPI transfer to protein. The sequence is that of Glycosylphosphatidylinositol anchor biosynthesis protein 11 (GPI11) from Debaryomyces hansenii (strain ATCC 36239 / CBS 767 / BCRC 21394 / JCM 1990 / NBRC 0083 / IGC 2968) (Yeast).